Here is a 219-residue protein sequence, read N- to C-terminus: Isovaleryl-homoserine lactone synthase (219 aa).

The protein belongs to the autoinducer synthase family.

The enzyme catalyses 3-methylbutanoyl-CoA + S-adenosyl-L-methionine = N-isovaleryl-L-homoserine lactone + S-methyl-5'-thioadenosine + CoA + H(+). In terms of biological role, catalyzes the synthesis of IV-HSL (isovaleryl-homoserine lactone), a quorum-sensing (QS) autoinducer molecule which binds to BjaR1 transcriptional regulator to activate expression of QS-dependent genes. Is active with isovaleryl-CoA but cannot use isovaleryl-ACP as acyl donor. The sequence is that of Isovaleryl-homoserine lactone synthase (bjaI) from Bradyrhizobium diazoefficiens (strain JCM 10833 / BCRC 13528 / IAM 13628 / NBRC 14792 / USDA 110).